We begin with the raw amino-acid sequence, 313 residues long: uncharacterized protein (313 aa).

3 helical membrane-spanning segments follow: residues 19–41 (GLAV…AGFL), 51–68 (AIIG…IFFL), and 81–103 (IAEF…DFAI).

It localises to the cell membrane. This is an uncharacterized protein from Aquifex aeolicus (strain VF5).